The following is a 190-amino-acid chain: Subtilisin inhibitor CLSI-II (190 aa).

2 disulfides stabilise this stretch: cysteine 44–cysteine 88 and cysteine 142–cysteine 149.

The protein belongs to the protease inhibitor I3 (leguminous Kunitz-type inhibitor) family. As to quaternary structure, forms active dimers on storage in aqueous solution, possibly through formation of an intermolecular disulfide bond. In terms of processing, the N-terminal Asn is removed in about 50% of both the CLSI-II and CLSI-III chains.

The protein localises to the secreted. Functionally, inhibits subtilisin-type microbial serine proteases incuding proteinase K, subtilisin BPN', subtilisin Carlsberg and subtilisin E in a non-stoichiometric manner. Weakly inhibits A.oryzae protease and some metalloproteases including pronase E. Does not inhibit trypsin, chymotrypsin, S.griseus alkaline protease or A.lyticus lysyl endopeptidase. CLSI-II has a wider inhibitory specificity than CLSI-III. This is Subtilisin inhibitor CLSI-II from Canavalia lineata (Beach bean).